The primary structure comprises 467 residues: Putative gluconeogenesis factor (467 aa).

Residues 1–12 show a composition bias toward pro residues; the sequence is MSAPPAPPPDRS. Residues 1 to 27 are disordered; it reads MSAPPAPPPDRSAPPDRTDSAQTEPTR.

It belongs to the gluconeogenesis factor family.

The protein localises to the cytoplasm. Its function is as follows. Required for morphogenesis under gluconeogenic growth conditions. This Deinococcus radiodurans (strain ATCC 13939 / DSM 20539 / JCM 16871 / CCUG 27074 / LMG 4051 / NBRC 15346 / NCIMB 9279 / VKM B-1422 / R1) protein is Putative gluconeogenesis factor.